A 475-amino-acid chain; its full sequence is Ribulose bisphosphate carboxylase large chain (475 aa).

A propeptide spanning residues 1–2 (MS) is cleaved from the precursor. Residue proline 3 is modified to N-acetylproline. Lysine 14 carries the N6,N6,N6-trimethyllysine modification. Asparagine 123 and threonine 173 together coordinate substrate. The active-site Proton acceptor is lysine 175. Residue lysine 177 coordinates substrate. 3 residues coordinate Mg(2+): lysine 201, aspartate 203, and glutamate 204. Lysine 201 carries the N6-carboxylysine modification. Histidine 294 (proton acceptor) is an active-site residue. Substrate-binding residues include arginine 295, histidine 327, and serine 379.

Belongs to the RuBisCO large chain family. Type I subfamily. As to quaternary structure, heterohexadecamer of 8 large chains and 8 small chains; disulfide-linked. The disulfide link is formed within the large subunit homodimers. It depends on Mg(2+) as a cofactor. In terms of processing, the disulfide bond which can form in the large chain dimeric partners within the hexadecamer appears to be associated with oxidative stress and protein turnover.

The protein resides in the plastid. It localises to the chloroplast. It catalyses the reaction 2 (2R)-3-phosphoglycerate + 2 H(+) = D-ribulose 1,5-bisphosphate + CO2 + H2O. The enzyme catalyses D-ribulose 1,5-bisphosphate + O2 = 2-phosphoglycolate + (2R)-3-phosphoglycerate + 2 H(+). Its function is as follows. RuBisCO catalyzes two reactions: the carboxylation of D-ribulose 1,5-bisphosphate, the primary event in carbon dioxide fixation, as well as the oxidative fragmentation of the pentose substrate in the photorespiration process. Both reactions occur simultaneously and in competition at the same active site. The polypeptide is Ribulose bisphosphate carboxylase large chain (Gossypium hirsutum (Upland cotton)).